The sequence spans 410 residues: Peptidase T (410 aa).

His79 provides a ligand contact to Zn(2+). The active site involves Asp81. Asp142 serves as a coordination point for Zn(2+). Glu176 functions as the Proton acceptor in the catalytic mechanism. 3 residues coordinate Zn(2+): Glu177, Asp199, and His381.

The protein belongs to the peptidase M20B family. Zn(2+) serves as cofactor.

It localises to the cytoplasm. It carries out the reaction Release of the N-terminal residue from a tripeptide.. Cleaves the N-terminal amino acid of tripeptides. The chain is Peptidase T from Bacillus mycoides (strain KBAB4) (Bacillus weihenstephanensis).